Consider the following 68-residue polypeptide: Small integral membrane protein 10-like protein 3 (68 aa).

The protein is Small integral membrane protein 10-like protein 3 of Homo sapiens (Human).